A 187-amino-acid polypeptide reads, in one-letter code: UPF0301 protein Sbal195_3177 (187 aa).

Belongs to the UPF0301 (AlgH) family.

In Shewanella baltica (strain OS195), this protein is UPF0301 protein Sbal195_3177.